Here is a 692-residue protein sequence, read N- to C-terminus: Eomesodermin (692 aa).

The interval 35–135 is disordered; sequence NSSTPNLPHT…LNTAVPTSAP (101 aa). Residues 263-443 constitute a DNA-binding region (T-box); that stretch reads LWLKFHRHQT…HNPFAKGFRD (181 aa). The required for transcription activation stretch occupies residues 578–692; that stretch reads SMAGWGSRGS…LGYYSFYSSS (115 aa). 2 disordered regions span residues 595-614 and 621-673; these read TSLPWSSRSSPSGFSEDLLP and EMSS…DIGT. Composition is skewed to low complexity over residues 596–609 and 654–665; these read SLPWSSRSSPSGFS and SPSTSSNENSPP.

It localises to the nucleus. Its function is as follows. Functions as a transcriptional activator playing a crucial role during development. Functions in gastrulation, regulating mesoderm differentiation. Activates wnt8, t/bra, chrd and mix-A/mix.1 expression. This chain is Eomesodermin (eomes), found in Xenopus laevis (African clawed frog).